The following is a 196-amino-acid chain: MAASSTLESLTEALRRLPGVGVKSAQRMAYHLLQHDREGALRLARALEQAVATVRHCERCNTFTEAPVCSTCLDPARERRQLCVVETPADQAAVERSGSYHGLYFVLMGRLSPLDGIGVHDIGLEKLLARATDGEVQELIVATNFTAEGEATAHVIAQALKGRGPSVTRLARGVPVGSELEYVDLGTIAHALSDRR.

The segment at 57–72 (CERCNTFTEAPVCSTC) adopts a C4-type zinc-finger fold. The Toprim domain occupies 80–175 (RQLCVVETPA…SVTRLARGVP (96 aa)).

It belongs to the RecR family.

Its function is as follows. May play a role in DNA repair. It seems to be involved in an RecBC-independent recombinational process of DNA repair. It may act with RecF and RecO. The sequence is that of Recombination protein RecR from Methylibium petroleiphilum (strain ATCC BAA-1232 / LMG 22953 / PM1).